A 237-amino-acid chain; its full sequence is uncharacterized protein (237 aa).

7 consecutive transmembrane segments (helical) span residues 19–39 (ILNG…GLAW), 51–71 (YDSP…YGLS), 81–101 (IAGV…ASLV), 106–126 (IIIV…AGLL), 136–156 (FIIM…AALM), 159–179 (RPIW…ISHG), and 209–229 (LYYY…TLVW).

Its subcellular location is the cell membrane. This is an uncharacterized protein from Escherichia coli (strain K12).